The sequence spans 518 residues: Probable lysine--tRNA ligase, cytoplasmic (518 aa).

Belongs to the class-II aminoacyl-tRNA synthetase family. Homodimer.

The protein resides in the cytoplasm. The enzyme catalyses tRNA(Lys) + L-lysine + ATP = L-lysyl-tRNA(Lys) + AMP + diphosphate. The polypeptide is Probable lysine--tRNA ligase, cytoplasmic (Enterocytozoon bieneusi (strain H348) (Microsporidian parasite)).